Reading from the N-terminus, the 1166-residue chain is Serine/threonine-protein kinase BRI1-like 1 (1166 aa).

Positions Met1–Gly21 are cleaved as a signal peptide. Over Ile22–Thr776 the chain is Extracellular. Residue Asn33 is glycosylated (N-linked (GlcNAc...) asparagine). The Cys pair 1 motif lies at Cys66–Cys73. LRR repeat units follow at residues Arg78–Thr99, Asn103–Asp124, Tyr126–Phe147, Asn152–Ser173, Ser176–Ser197, Ser202–Ile224, Asn227–Pro248, Phe252–Gly274, Asn278–Leu300, Thr303–Cys325, Trp327–Lys349, Gly352–Ser375, Asn376–Ser397, Val403–Lys424, Ser427–Leu449, Asn451–Lys473, Asn476–Cys498, Asn500–Leu522, Lys524–Lys547, and Ser548–Gln570. Asn97 is a glycosylation site (N-linked (GlcNAc...) asparagine). An N-linked (GlcNAc...) asparagine glycan is attached at Asn157. N-linked (GlcNAc...) asparagine glycosylation is found at Asn212, Asn227, Asn237, and Asn257. 2 N-linked (GlcNAc...) asparagine glycosylation sites follow: Asn362 and Asn373. Asn451 and Asn461 each carry an N-linked (GlcNAc...) asparagine glycan. N-linked (GlcNAc...) asparagine glycosylation is found at Asn521, Asn532, Asn558, and Asn638. LRR repeat units follow at residues Tyr664–Leu686, Ala688–Leu710, and Phe712–Thr734. Asn722 and Asn743 each carry an N-linked (GlcNAc...) asparagine glycan. The Cys pair 2 signature appears at Cys748–Cys755. The helical transmembrane segment at Ala777–Tyr797 threads the bilayer. The Cytoplasmic segment spans residues Arg798 to Pro1166. Phosphothreonine occurs at positions 848 and 856. The Protein kinase domain maps to Phe859–Leu1147. ATP-binding positions include Val865 to Val873 and Lys887. Tyr932 is modified (phosphotyrosine). Asp987 (proton acceptor) is an active-site residue. Ser1022 carries the post-translational modification Phosphoserine. A Phosphotyrosine modification is found at Tyr1030. Thr1141 carries the post-translational modification Phosphothreonine. Positions Glu1142–Pro1166 are disordered.

This sequence belongs to the protein kinase superfamily. Ser/Thr protein kinase family. In terms of tissue distribution, predominantly expressed in vascular tissues. From 7 day old seedlings, it is expressed in the columella cells of the root tip, in the vascular initials in the meristematic region of the root and in vascular tissues. After germination, it is expressed in the stele cell and in the early differentiation zone of the root, where the expression continues from the root to the hypocotyls and cotyledons following the midvein. In mature plants, it is expressed in the vasculature of the leaf, predominantly in the midvein, and in the vascular bundles of inflorescence stems. Localizes to procambial cells of the vascular bundles located between the differentiating xylem and the phloem.

It is found in the cell membrane. It catalyses the reaction L-seryl-[protein] + ATP = O-phospho-L-seryl-[protein] + ADP + H(+). The catalysed reaction is L-threonyl-[protein] + ATP = O-phospho-L-threonyl-[protein] + ADP + H(+). Receptor with a serine/threonine-protein kinase activity. Regulates, in response to brassinosteroid binding, a signaling cascade involved in plant development. Binds brassinolide. May be involved in cell growth and vascular differentiation. In Arabidopsis thaliana (Mouse-ear cress), this protein is Serine/threonine-protein kinase BRI1-like 1 (BRL1).